We begin with the raw amino-acid sequence, 65 residues long: MKVFSIMKISDIIKRLREDWKRIISVAKKPDKDSFNYSIRLTLLVMAVVGLIAYIVQLTTSLIIR.

A helical membrane pass occupies residues 44–64 (LVMAVVGLIAYIVQLTTSLII).

This sequence belongs to the SecE/SEC61-gamma family. Component of the Sec protein translocase complex. Heterotrimer consisting of SecY (alpha), SecG (beta) and SecE (gamma) subunits. The heterotrimers can form oligomers, although 1 heterotrimer is thought to be able to translocate proteins. Interacts with the ribosome. May interact with SecDF, and other proteins may be involved.

It is found in the cell membrane. Essential subunit of the Sec protein translocation channel SecYEG. Clamps together the 2 halves of SecY. May contact the channel plug during translocation. This Sulfolobus acidocaldarius (strain ATCC 33909 / DSM 639 / JCM 8929 / NBRC 15157 / NCIMB 11770) protein is Protein translocase subunit SecE.